Consider the following 347-residue polypeptide: GMP reductase (347 aa).

Ala-108–Ala-131 contributes to the NADP(+) binding site. K(+) is bound by residues Gly-181 and Gly-183. Cys-186 serves as the catalytic Thioimidate intermediate. Ile-216–Val-239 is an NADP(+) binding site.

It belongs to the IMPDH/GMPR family. GuaC type 1 subfamily. In terms of assembly, homotetramer.

It carries out the reaction IMP + NH4(+) + NADP(+) = GMP + NADPH + 2 H(+). Its function is as follows. Catalyzes the irreversible NADPH-dependent deamination of GMP to IMP. It functions in the conversion of nucleobase, nucleoside and nucleotide derivatives of G to A nucleotides, and in maintaining the intracellular balance of A and G nucleotides. The protein is GMP reductase of Salmonella paratyphi A (strain ATCC 9150 / SARB42).